Consider the following 56-residue polypeptide: Cecropin-A2 (56 aa).

Arginine amide is present on Arg-55.

The protein belongs to the cecropin family.

It localises to the secreted. Functionally, cecropins have lytic and antibacterial activity against several Gram-positive and Gram-negative bacteria. This is Cecropin-A2 (CecA2) from Drosophila yakuba (Fruit fly).